Reading from the N-terminus, the 1101-residue chain is Rho guanine nucleotide exchange factor gef2 (1101 aa).

The segment at 203–222 (EDSRKKTSSPSPSFASSKDA) is disordered. A compositionally biased stretch (low complexity) spans 210–219 (SSPSPSFASS). The DH domain occupies 230 to 428 (KKKSLLIEMM…KNIAEMPTVD (199 aa)). S736 and S977 each carry phosphoserine.

The protein resides in the cytoplasm. It is found in the cytoskeleton. The protein localises to the microtubule organizing center. Its subcellular location is the spindle pole body. In terms of biological role, has a role in the control of cell polarity and cytokinesis. Involved in bipolar growth and septum formation. This is Rho guanine nucleotide exchange factor gef2 (gef2) from Schizosaccharomyces pombe (strain 972 / ATCC 24843) (Fission yeast).